A 119-amino-acid chain; its full sequence is Small ribosomal subunit protein uS10 (119 aa).

Alanine 2 is modified (N-acetylalanine). Lysine 4 participates in a covalent cross-link: Glycyl lysine isopeptide (Lys-Gly) (interchain with G-Cter in ubiquitin). Lysine 8 is subject to N6-succinyllysine; alternate. Residue lysine 8 forms a Glycyl lysine isopeptide (Lys-Gly) (interchain with G-Cter in ubiquitin); alternate linkage. Phosphothreonine is present on threonine 9. 2 positions are modified to N6-acetyllysine: lysine 34 and lysine 75. Position 93 is a phosphoserine (serine 93).

This sequence belongs to the universal ribosomal protein uS10 family. As to quaternary structure, component of the 40S small ribosomal subunit. In terms of processing, polyubiquitinated by ZNF598 via 'Lys-63'-linked ubiquitin chains when a ribosome has stalled, initiating the ribosome quality control (RQC) pathway to degrade the potentially detrimental aberrant nascent polypeptide. Deubiquitinated by OTUD3 and USP21, antagonizing ZNF598 activity. Post-translationally, ufmylated by UFL1.

Its subcellular location is the cytoplasm. Functionally, component of the small ribosomal subunit. The ribosome is a large ribonucleoprotein complex responsible for the synthesis of proteins in the cell. This Rattus norvegicus (Rat) protein is Small ribosomal subunit protein uS10 (Rps20).